We begin with the raw amino-acid sequence, 563 residues long: Putative cysteine ligase BshC (563 aa).

Positions 493–518 (KEKTYRAGRRKHDELLQQLDKAELNL) form a coiled coil.

This sequence belongs to the BshC family.

This Chlorobaculum tepidum (strain ATCC 49652 / DSM 12025 / NBRC 103806 / TLS) (Chlorobium tepidum) protein is Putative cysteine ligase BshC.